The primary structure comprises 554 residues: RecBCD enzyme subunit RecD (554 aa).

155-162 (GGPGTGKT) provides a ligand contact to ATP.

It belongs to the RecD family. Heterotrimer of RecB, RecC and RecD. All subunits contribute to DNA-binding.

It catalyses the reaction Couples ATP hydrolysis with the unwinding of duplex DNA at the replication fork by translocating in the 5'-3' direction. This creates two antiparallel DNA single strands (ssDNA). The leading ssDNA polymer is the template for DNA polymerase III holoenzyme which synthesizes a continuous strand.. The enzyme catalyses ATP + H2O = ADP + phosphate + H(+). A helicase/nuclease that prepares dsDNA breaks (DSB) for recombinational DNA repair. Binds to DSBs and unwinds DNA via a highly rapid and processive ATP-dependent bidirectional helicase activity. Holoenzyme degrades any linearized DNA that is unable to undergo homologous recombination. In the holoenzyme this subunit has ssDNA-dependent ATPase and 5'-3' helicase activity. When added to pre-assembled RecBC greatly stimulates nuclease activity and augments holoenzyme processivity. Unlike the case in E.coli, suppresses RecA-dependent homologous recombination, is instead required for single-strand annealing pathway repair of DSB. The chain is RecBCD enzyme subunit RecD from Mycolicibacterium smegmatis (strain ATCC 700084 / mc(2)155) (Mycobacterium smegmatis).